The primary structure comprises 404 residues: Cysteine desulfurase IscS (404 aa).

Residues 75–76 (AT), Asn155, Gln183, and 203–205 (TGH) each bind pyridoxal 5'-phosphate. Position 206 is an N6-(pyridoxal phosphate)lysine (Lys206). A pyridoxal 5'-phosphate-binding site is contributed by Thr243. Cys328 acts as the Cysteine persulfide intermediate in catalysis. Cys328 is a [2Fe-2S] cluster binding site.

The protein belongs to the class-V pyridoxal-phosphate-dependent aminotransferase family. NifS/IscS subfamily. Homodimer. Forms a heterotetramer with IscU, interacts with other sulfur acceptors. Pyridoxal 5'-phosphate serves as cofactor.

It is found in the cytoplasm. The catalysed reaction is (sulfur carrier)-H + L-cysteine = (sulfur carrier)-SH + L-alanine. The protein operates within cofactor biosynthesis; iron-sulfur cluster biosynthesis. Master enzyme that delivers sulfur to a number of partners involved in Fe-S cluster assembly, tRNA modification or cofactor biosynthesis. Catalyzes the removal of elemental sulfur atoms from cysteine to produce alanine. Functions as a sulfur delivery protein for Fe-S cluster synthesis onto IscU, an Fe-S scaffold assembly protein, as well as other S acceptor proteins. The protein is Cysteine desulfurase IscS of Enterobacter sp. (strain 638).